The primary structure comprises 90 residues: MARTIFCTYLQRDAEGQDFQLYPGDLGKRIFNEISKEAWAQWQQKQTMLINEKKLTMMNPDHRKLLEAEMVNFLFEGKEVHIEGYTPPEK.

The protein belongs to the Fe(2+)-trafficking protein family. As to quaternary structure, monomer.

In terms of biological role, could be a mediator in iron transactions between iron acquisition and iron-requiring processes, such as synthesis and/or repair of Fe-S clusters in biosynthetic enzymes. The sequence is that of Probable Fe(2+)-trafficking protein from Enterobacter sp. (strain 638).